Reading from the N-terminus, the 518-residue chain is MFSLQDLCRKNIFFLPNDFSKHTLQWLGLYWKEHGSVHRAEKDSIMIQNELVLSINDALLLAGEEGDTDVVQLLLLWEGNLHYAIIGALKTEKYSLVCEYHSQIQDWHVLLPLIQDPETFEKCHDLSLECDFICLLQHAVKCDMLSILVKYKEDLLNVRIRHRIQSLFVLACENRRFEIIEWIGQNLPIPEPEAIFSIAIVTKDIELFSLGYKLIFDYMQRQGTFQLTNMVRMLLLNRYIGMAIEKGLLPFIVETLKYGGSVNRALSYAVIDNKRKIIDYLVRHENIPRGTIERLLHLAVKKQSSRKTLNLLLSYINYKVKNVKKLVEHVVDHNSTLVLKILLEKKENLVDAVLTRLVKHSTYFRVREFIQEFSISPEKFIKIAVREQKNVLIEAISEDIWENPTERITYLKQIVHTIKYESGRRFLIDIIHSIYQSYSLKHEDILKLAIFYVKYNAITHFKDLCKYLWLNRGTESKKLFLECLEIADEKEFPDIKSIVSEYINYLFTAGAITKEEII.

ANK repeat units lie at residues 54 to 83, 129 to 158, 261 to 290, 292 to 322, and 324 to 351; these read SIND…NLHY, ECDF…LLNV, SVNR…IPRG, IERL…KVKN, and KKLV…NLVD.

It belongs to the asfivirus MGF 505 family.

In terms of biological role, plays a role in virus cell tropism, and may be required for efficient virus replication in macrophages. The polypeptide is Protein MGF 505-6R (Ornithodoros (relapsing fever ticks)).